The sequence spans 169 residues: Ubiquitin-fold modifier-conjugating enzyme 1 (169 aa).

The active-site Glycyl thioester intermediate is Cys116.

Belongs to the ubiquitin-conjugating enzyme family. UFC1 subfamily.

In terms of biological role, E2-like enzyme which forms an intermediate with UFM1 via a thioester linkage. The protein is Ubiquitin-fold modifier-conjugating enzyme 1 of Nematostella vectensis (Starlet sea anemone).